Here is a 245-residue protein sequence, read N- to C-terminus: Dehydrogenase/reductase SDR family member 6 (245 aa).

NAD(+) contacts are provided by residues 16–18 (QGI), aspartate 37, and aspartate 58. Arginine 144 lines the substrate pocket. Residue tyrosine 147 is the Proton acceptor of the active site. NAD(+) is bound by residues lysine 151 and 180 to 184 (VDTPS). Residues arginine 188 and arginine 205 each coordinate substrate.

Belongs to the short-chain dehydrogenases/reductases (SDR) family. Homotetramer.

The protein resides in the cytoplasm. The enzyme catalyses cis-4-hydroxy-L-proline + NAD(+) = 4-oxo-L-proline + NADH + H(+). It carries out the reaction (R)-3-hydroxybutanoate + NAD(+) = acetoacetate + NADH + H(+). Its pathway is amino-acid metabolism. The protein operates within siderophore biosynthesis. In terms of biological role, NAD(H)-dependent dehydrogenase/reductase with a preference for cyclic substrates. Catalyzes stereoselective conversion of 4-oxo-L-proline to cis-4-hydroxy-L-proline, likely a detoxification mechanism for ketoprolines. Mediates the formation of 2,5-dihydroxybenzoate (2,5-DHBA), a siderophore that chelates free cytoplasmic iron, thereby regulating iron transport and homeostasis while protecting cells against free radical-induced oxidative stress. The iron-siderophore complex is imported into mitochondria, providing an iron source for mitochondrial metabolic processes in particular heme synthesis. May act as a 3-hydroxybutyrate dehydrogenase. The protein is Dehydrogenase/reductase SDR family member 6 (bdh2) of Xenopus laevis (African clawed frog).